The primary structure comprises 287 residues: N-acetylmannosamine kinase (287 aa).

ATP-binding positions include 5 to 12 (AIDIGGTK) and 131 to 138 (GVGGGIII). Positions 155, 165, 167, and 172 each coordinate Zn(2+).

Belongs to the ROK (NagC/XylR) family. NanK subfamily. In terms of assembly, homodimer.

The catalysed reaction is an N-acyl-D-mannosamine + ATP = an N-acyl-D-mannosamine 6-phosphate + ADP + H(+). It functions in the pathway amino-sugar metabolism; N-acetylneuraminate degradation; D-fructose 6-phosphate from N-acetylneuraminate: step 2/5. Its function is as follows. Catalyzes the phosphorylation of N-acetylmannosamine (ManNAc) to ManNAc-6-P. The polypeptide is N-acetylmannosamine kinase (Vibrio cholerae serotype O1 (strain ATCC 39541 / Classical Ogawa 395 / O395)).